Here is a 696-residue protein sequence, read N- to C-terminus: uncharacterized protein (696 aa).

A GGDEF domain is found at 293 to 426 (SVLGLVLLGF…GSRQYCFYEE (134 aa)). The region spanning 435 to 689 (RIQLEHALHQ…EITAFLAEGN (255 aa)) is the EAL domain.

This is an uncharacterized protein from Synechocystis sp. (strain ATCC 27184 / PCC 6803 / Kazusa).